The sequence spans 29 residues: Cytochrome b6-f complex subunit 8 (29 aa).

Residues 3-23 (ITSIAWGALMVVFTFSLSLVV) traverse the membrane as a helical segment.

This sequence belongs to the PetN family. As to quaternary structure, the 4 large subunits of the cytochrome b6-f complex are cytochrome b6, subunit IV (17 kDa polypeptide, PetD), cytochrome f and the Rieske protein, while the 4 small subunits are PetG, PetL, PetM and PetN. The complex functions as a dimer.

It is found in the plastid membrane. In terms of biological role, component of the cytochrome b6-f complex, which mediates electron transfer between photosystem II (PSII) and photosystem I (PSI), cyclic electron flow around PSI, and state transitions. This is Cytochrome b6-f complex subunit 8 from Aneura mirabilis (Parasitic liverwort).